The following is an 82-amino-acid chain: Progonadoliberin-3 (82 aa).

The signal sequence occupies residues 1–23 (MDLSNRTVVQVVVLALVAQVTLS). Residue Q24 is modified to Pyrrolidone carboxylic acid. Residue G33 is modified to Glycine amide.

The protein belongs to the GnRH family. Brain.

It localises to the secreted. Functionally, stimulates the secretion of gonadotropins. The chain is Progonadoliberin-3 (gnrh3) from Oncorhynchus nerka (Sockeye salmon).